The chain runs to 271 residues: Putative protein FAM220BP (271 aa).

This chain is Putative protein FAM220BP (FAM220BP), found in Homo sapiens (Human).